A 580-amino-acid polypeptide reads, in one-letter code: 3-(3-hydroxy-phenyl)propionate/3-hydroxycinnamic acid hydroxylase (580 aa).

FAD-binding positions include 14 to 43 (DVLV…VVEE) and 291 to 301 (FRRGRLLLAGD).

It belongs to the PheA/TfdB FAD monooxygenase family. It depends on FAD as a cofactor.

The catalysed reaction is 3-(3-hydroxyphenyl)propanoate + NADH + O2 + H(+) = 3-(2,3-dihydroxyphenyl)propanoate + NAD(+) + H2O. It carries out the reaction (2E)-3-(3-hydroxyphenyl)prop-2-enoate + NADH + O2 + H(+) = (2E)-3-(2,3-dihydroxyphenyl)prop-2-enoate + NAD(+) + H2O. The protein operates within aromatic compound metabolism; 3-phenylpropanoate degradation. Its function is as follows. Catalyzes the insertion of one atom of molecular oxygen into position 2 of the phenyl ring of 3-(3-hydroxyphenyl)propionate (3-HPP) and hydroxycinnamic acid (3HCI). This Mycobacterium avium (strain 104) protein is 3-(3-hydroxy-phenyl)propionate/3-hydroxycinnamic acid hydroxylase.